A 202-amino-acid chain; its full sequence is 3-isopropylmalate dehydratase small subunit (202 aa).

Belongs to the LeuD family. LeuD type 1 subfamily. Heterodimer of LeuC and LeuD.

It catalyses the reaction (2R,3S)-3-isopropylmalate = (2S)-2-isopropylmalate. Its pathway is amino-acid biosynthesis; L-leucine biosynthesis; L-leucine from 3-methyl-2-oxobutanoate: step 2/4. Catalyzes the isomerization between 2-isopropylmalate and 3-isopropylmalate, via the formation of 2-isopropylmaleate. The sequence is that of 3-isopropylmalate dehydratase small subunit from Rhizobium etli (strain CIAT 652).